Reading from the N-terminus, the 563-residue chain is Cytochrome P450 monooxygenase efuG (563 aa).

The helical transmembrane segment at 10–30 (ITSHQWGIGSVFLLISIPLIV) threads the bilayer. The tract at residues 462–482 (PDDPQSGPRKDAKKQKAKSDG) is disordered. Position 505 (Cys-505) interacts with heme.

Belongs to the cytochrome P450 family. Heme is required as a cofactor.

The protein resides in the membrane. It participates in secondary metabolite biosynthesis; terpenoid biosynthesis. Cytochrome P450 monooxygenase; part of the gene cluster that mediates the biosynthesis of enfumafungin, a glycosylated fernene-type triterpenoid with potent antifungal activity, mediated by its interaction with beta-1,3-glucan synthase and the fungal cell wall. The pathway begins with the terpene cyclase-glycosyl transferase fusion protein that most likely uses 2,3-oxidosqualene as substrate and catalyzes glycosylation immediately after cyclization. The fernene glycoside then could be processed by the desaturase efuI which catalyzes isomerization of a double bond established by efuA to form the core structure. The latter would then undergo a series of hydroxylations in unknown order at C-2, C-19, C-23 and C-25, which would be catalyzed by two of the three cytochrome P450 monooxygenases efuB, efuG or efuH. The hydroxy-group at C-25 becomes oxidized by the dehydrogenase efuE to enable a spontaneous, non-enzymatic hemiacetal formation with C-23. After hydroxylation at C-2, acetylation by the acetyltransferase efuC takes place. The final steps in enfumafungin biosynthesis require expansion of the 5-membered ring by lactonization via a Baeyer-Villiger reaction mediated by one of the BGC's cytochrome P450 monooxygenases (efuB, efuG or efuH) followed by ring cleavage. This type of reaction would establish a double bond between C-20 and C-21 which could be reduced by the reductase efuL to form the final product. This is Cytochrome P450 monooxygenase efuG from Hormonema carpetanum.